Reading from the N-terminus, the 562-residue chain is NAD-dependent malic enzyme (562 aa).

Tyr-101 acts as the Proton donor in catalysis. Position 154 (Arg-154) interacts with NAD(+). Catalysis depends on Lys-172, which acts as the Proton acceptor. A divalent metal cation is bound by residues Glu-243, Asp-244, and Asp-267. NAD(+) contacts are provided by Asp-267 and Asn-415.

It belongs to the malic enzymes family. Homotetramer. It depends on Mg(2+) as a cofactor. Requires Mn(2+) as cofactor.

It catalyses the reaction (S)-malate + NAD(+) = pyruvate + CO2 + NADH. The enzyme catalyses oxaloacetate + H(+) = pyruvate + CO2. The sequence is that of NAD-dependent malic enzyme from Shewanella sp. (strain MR-4).